A 91-amino-acid polypeptide reads, in one-letter code: Non-specific lipid-transfer protein 1 (91 aa).

4 cysteine pairs are disulfide-bonded: C3–C50, C13–C27, C28–C73, and C48–C87.

Belongs to the plant LTP family.

In terms of biological role, plant non-specific lipid-transfer proteins transfer phospholipids as well as galactolipids across membranes. May play a role in wax or cutin deposition in the cell walls of expanding epidermal cells and certain secretory tissues. The protein is Non-specific lipid-transfer protein 1 of Morus nigra (Black mulberry).